Consider the following 161-residue polypeptide: Cell division control protein 31 (161 aa).

4 consecutive EF-hand domains span residues 20–55 (EQKQ…LGFE), 56–91 (LPKR…KILK), 93–128 (DPLD…LGET), and 129–161 (LTDE…CTDS). Aspartate 33, asparagine 35, aspartate 37, and glutamate 44 together coordinate Ca(2+). Position 130 is a phosphothreonine (threonine 130). The Ca(2+) site is built by aspartate 142, aspartate 144, aspartate 146, glutamate 148, and glutamate 153.

It belongs to the centrin family. In terms of assembly, component of the spindle pole body (SPB), acting as the connector of microtubule arrays in the cytoplasm and the nucleoplasm, is involved in nuclear positioning before chromosome segregation, SPB separation, spindle formation, chromosome segregation, nuclear migration into the bud, nuclear reorientation after cytokinesis and nuclear fusion during conjugation. The SPB half-bridge, which is tightly associated with the cytoplasmic side of the nuclear envelope and the SPB, is playing a key role as the starting structure for and in the initiation of SPB duplication in G1. At the SPB half-bridge CDC31 interacts with KAR1, MPS3 and SFI1. Interacts with KIC1. Interacts with VPS13. Associates with nuclear pore complexes (NPCs).

The protein resides in the nucleus envelope. The protein localises to the cytoplasm. It localises to the cytoskeleton. It is found in the microtubule organizing center. Its subcellular location is the spindle pole body. Functionally, functions as a component of the spindle pole body (SPB) half-bridge. At the SPB, it is recruited by KAR1 and MPS3 to the SPB half-bridge and involved in the initial steps of SPB duplication. Also involved in connection with the protein kinase KIC1 in the maintenance of cell morphology and integrity. May play a role in vesicle-mediated transport, in a VPS13-dependent manner. The sequence is that of Cell division control protein 31 (CDC31) from Saccharomyces cerevisiae (strain ATCC 204508 / S288c) (Baker's yeast).